The primary structure comprises 580 residues: MSENRNEGSSQAAKANSDTQTPSHFKVTHPRLRDQLKKKSSKKKGFKFVQEKMLKFQHVIRNQFLQQISQQMQCVPPGDQQCTQTSRKRKKMGYLLSQMVNFLWSNTVKKLKFKVPLPCLDSRCGIKVGHQTLSPWQTGQSRPSLGGFEAALASCTLSKRGAGIYESYHLSFQSYEAYQADKYHKDKNPSGYINLSTSENKLCLDLITARLTQSDMNLLDEAQLQYSDWKGQPFLREELASFLTHYCKAPTPLDPENVVVLNGCSSVFASLAMVLCDPGDALLIPTPCYNGFVFSSHLYSKIELIPVHLESQVPRSNLDSFQLTVDKLKLALTQAKKKAKKVKGLVLINPQNPLGDVYTQSSLQEYLVFAKTHKLHVIMDEIYMLSVFEPSVTFHSVLSIKDLPDPNMTHMIWGTSKDFGMSGIRFGVLYTHNKEVASAMKAFGYHHGVSGITQYKLCRLLQDKEWISKVYLPKNHSRLQKAYSYITKILKDLKIPFYNGGSGLFVWINLKAYLSPCTFDQEQILHQRFRDKKLLLSSGKSYMCIEPGWFRLVFAETHLHLQVAMDRFCHVLAEHKKHEK.

The interval 1–43 (MSENRNEGSSQAAKANSDTQTPSHFKVTHPRLRDQLKKKSSKK) is disordered. The span at 7–23 (EGSSQAAKANSDTQTPS) shows a compositional bias: polar residues. An N6-(pyridoxal phosphate)lysine modification is found at lysine 417.

The protein belongs to the class-I pyridoxal-phosphate-dependent aminotransferase family.

The chain is Probable inactive 1-aminocyclopropane-1-carboxylate synthase-like protein 2 (Accsl) from Mus musculus (Mouse).